Here is a 157-residue protein sequence, read N- to C-terminus: 6,7-dimethyl-8-ribityllumazine synthase (157 aa).

Residues Phe22, 56–58 (AFE), and 81–83 (VLI) each bind 5-amino-6-(D-ribitylamino)uracil. 86 to 87 (ET) serves as a coordination point for (2S)-2-hydroxy-3-oxobutyl phosphate. Catalysis depends on His89, which acts as the Proton donor. A 5-amino-6-(D-ribitylamino)uracil-binding site is contributed by Phe114. Arg128 contributes to the (2S)-2-hydroxy-3-oxobutyl phosphate binding site.

The protein belongs to the DMRL synthase family.

It catalyses the reaction (2S)-2-hydroxy-3-oxobutyl phosphate + 5-amino-6-(D-ribitylamino)uracil = 6,7-dimethyl-8-(1-D-ribityl)lumazine + phosphate + 2 H2O + H(+). The protein operates within cofactor biosynthesis; riboflavin biosynthesis; riboflavin from 2-hydroxy-3-oxobutyl phosphate and 5-amino-6-(D-ribitylamino)uracil: step 1/2. Catalyzes the formation of 6,7-dimethyl-8-ribityllumazine by condensation of 5-amino-6-(D-ribitylamino)uracil with 3,4-dihydroxy-2-butanone 4-phosphate. This is the penultimate step in the biosynthesis of riboflavin. The polypeptide is 6,7-dimethyl-8-ribityllumazine synthase (Chlamydia trachomatis serovar L2 (strain ATCC VR-902B / DSM 19102 / 434/Bu)).